A 502-amino-acid polypeptide reads, in one-letter code: Cysteine--tRNA ligase (502 aa).

C30 contacts Zn(2+). Positions 32 to 42 match the 'HIGH' region motif; sequence PTIYDYAHIGN. Zn(2+) is bound by residues C224, H263, and E267. A 'KMSKS' region motif is present at residues 296–300; that stretch reads KMSKS. An ATP-binding site is contributed by K299.

This sequence belongs to the class-I aminoacyl-tRNA synthetase family. Monomer. Requires Zn(2+) as cofactor.

Its subcellular location is the cytoplasm. It carries out the reaction tRNA(Cys) + L-cysteine + ATP = L-cysteinyl-tRNA(Cys) + AMP + diphosphate. The polypeptide is Cysteine--tRNA ligase (Bartonella quintana (strain Toulouse) (Rochalimaea quintana)).